Here is a 121-residue protein sequence, read N- to C-terminus: NAD(P)H-quinone oxidoreductase subunit M (121 aa).

This sequence belongs to the complex I NdhM subunit family. As to quaternary structure, NDH-1 can be composed of about 15 different subunits; different subcomplexes with different compositions have been identified which probably have different functions.

It localises to the cellular thylakoid membrane. The catalysed reaction is a plastoquinone + NADH + (n+1) H(+)(in) = a plastoquinol + NAD(+) + n H(+)(out). The enzyme catalyses a plastoquinone + NADPH + (n+1) H(+)(in) = a plastoquinol + NADP(+) + n H(+)(out). NDH-1 shuttles electrons from an unknown electron donor, via FMN and iron-sulfur (Fe-S) centers, to quinones in the respiratory and/or the photosynthetic chain. The immediate electron acceptor for the enzyme in this species is believed to be plastoquinone. Couples the redox reaction to proton translocation, and thus conserves the redox energy in a proton gradient. Cyanobacterial NDH-1 also plays a role in inorganic carbon-concentration. The polypeptide is NAD(P)H-quinone oxidoreductase subunit M (Synechococcus sp. (strain JA-2-3B'a(2-13)) (Cyanobacteria bacterium Yellowstone B-Prime)).